The sequence spans 196 residues: DnaA initiator-associating protein DiaA (196 aa).

The SIS domain maps to 34–196 (MVQSLLNGNK…DNTLFPHQND (163 aa)).

This sequence belongs to the SIS family. DiaA subfamily. As to quaternary structure, homotetramer; dimer of dimers.

Functionally, required for the timely initiation of chromosomal replication via direct interactions with the DnaA initiator protein. The chain is DnaA initiator-associating protein DiaA from Pectobacterium carotovorum subsp. carotovorum (strain PC1).